A 94-amino-acid polypeptide reads, in one-letter code: Conotoxin Im026 (94 aa).

Residues 1 to 24 form the signal peptide; it reads MRLTTMHSVILMLLLVFAFDNVDG. Positions 25–59 are excised as a propeptide; sequence DEPGQTARDVDNRNFMSILRSEGKPVHFLRAIKKR.

Post-translationally, contains 4 disulfide bonds. As to expression, expressed by the venom duct.

Its subcellular location is the secreted. Its function is as follows. Probable neurotoxin. The sequence is that of Conotoxin Im026 from Conus imperialis (Imperial cone).